A 413-amino-acid chain; its full sequence is MQKRVVILLLDSFGIGASEDAKDFGDLGANTLGNIAKACFNNLADSNDRSGALKLPYLEGLGLGLSALEAANELPLGFQPQPNLIGAYAYAQELSSAKDTISGHWEMMGAPVLFEWGYFKDKNDSFPKEILDEIARKTKIKGYLGNCHASGTEIIKDLGEKHLETLYPIFYTSADSVFQIAAHEEKFGLDNLYALCEEAFQILEPLKIARVIARPFIGTNRESFKRTANRKDYAIKPHKKLLFETFIEEKQGEVISIGKIADIYAHVGITQKFKAGSLMELCDVTLEQVKNAKNNSLIFTNFVHFDSDYGHRCDISGYANALEYFDTRLKEVLENLRENDLLILCADHGCDPSFKGTDHTREYIPVLFYHKDLQPAFLGKSDSFADIGQSIAYFLGLSPLDYGKNLLNFKGQP.

Residues Asp-11, Asp-306, His-311, Asp-347, His-348, and His-359 each coordinate Mn(2+).

This sequence belongs to the phosphopentomutase family. The cofactor is Mn(2+).

It is found in the cytoplasm. It catalyses the reaction 2-deoxy-alpha-D-ribose 1-phosphate = 2-deoxy-D-ribose 5-phosphate. It carries out the reaction alpha-D-ribose 1-phosphate = D-ribose 5-phosphate. Its pathway is carbohydrate degradation; 2-deoxy-D-ribose 1-phosphate degradation; D-glyceraldehyde 3-phosphate and acetaldehyde from 2-deoxy-alpha-D-ribose 1-phosphate: step 1/2. Its function is as follows. Isomerase that catalyzes the conversion of deoxy-ribose 1-phosphate (dRib-1-P) and ribose 1-phosphate (Rib-1-P) to deoxy-ribose 5-phosphate (dRib-5-P) and ribose 5-phosphate (Rib-5-P), respectively. This chain is Phosphopentomutase, found in Helicobacter pylori (strain P12).